A 646-amino-acid polypeptide reads, in one-letter code: MASGGAFCLIANDGKADKIILAQDLLNSRISNIKNVNKSYGKPDPEPTLSQIEETHLVHFNAHFKPYVPVGFEYNKVRPHTGTPTLGNKLTFGIPQYGDFFHDMVGHHILGACHSSWQDAPIQGTAQMGAHGQLQTFPRNGYDWDNQTPLEGAVYTLVDPFGRPIVPGTKNAYRNLVYYCEYPGERLYENVRFDVNGNSLDEYSSDVTTLVRKFCIPGDKMTGYKHLVGQEVSVEGTSGPLLCNIHDLHKPHQSKPILTDENDTQRTCSHTNPKFLSQHFPENSHNIQTAGKQDITPITDATYLDIRRNVHYSCNGPQTPKYYQPPLALWIKLRFWFNENVNLAIPSVSIPFGERFITIKLASQKDLVNEFPGLFIRQSRFIPGRPSRRNIRFKPWFIPGVINEISLTNNELYINNLFVTPEIHNLFVKRVRFSLIRVHKTQVTHTNNNHHDEKLMSALKWPIEYMFIGLKPTWNISDQNPHQHRDWHKFGHVVNAIMQPTHHAEISFQDRDTALPDACSSISDISPVTYPITLPIIKNISVTAHGINLIDKFPSKFCSSYIPFHYGGNAIKTPDDPGAMMITFALKPREEYQPSGHINVSRAREFYISWDTDYVGSITTADLVVSASAINFLLLQNGSAVLRYST.

It belongs to the NCLDV major capsid protein family. In terms of assembly, homotrimer. The membrane-bound form, but not the cytosolic one, assembles into large complexes. Interacts with the minor capsid proteins M1249L and p17; these interactions form a rigid zipper structure that stabilizes the capsomers.

It is found in the virion. The protein localises to the host endoplasmic reticulum membrane. Its subcellular location is the host cytoplasm. It localises to the host cytosol. Functionally, capsid protein that self-assembles to form the pseudo-hexameric capsomers of the icosahedral capsid. The capsid is constructed of 2760 pseudo-hexameric capsomers and 12 pentameric capsomers, with a T=277 symmetry, about 200 nm in diameter. The capsid encapsulates the DNA-containing nucleoid, the core shell and the inner membrane. Plays an essential role in virion assembly. Involved in virus attachment to the host cell. This Ornithodoros (relapsing fever ticks) protein is Hexon protein p72.